The chain runs to 92 residues: Small ribosomal subunit protein uS19c (92 aa).

This sequence belongs to the universal ribosomal protein uS19 family.

Its subcellular location is the plastid. The protein localises to the chloroplast. Functionally, protein S19 forms a complex with S13 that binds strongly to the 16S ribosomal RNA. The polypeptide is Small ribosomal subunit protein uS19c (rps19) (Chlorella vulgaris (Green alga)).